Consider the following 105-residue polypeptide: Prothymosin alpha-A (105 aa).

Basic and acidic residues predominate over residues 1–30 (MADTKVDTSKEVSAKDLKEKKQVEEAENGK). A disordered region spans residues 1–105 (MADTKVDTSK…VDPKKQKTDV (105 aa)). 2 stretches are compositionally biased toward acidic residues: residues 39 to 78 (ENEENGDQENEVDEEDDDVAEEDEEDDGEGDDDDEDEEAE) and 87 to 96 (EDDDDDEDDV).

It belongs to the pro/parathymosin family. In terms of tissue distribution, at the 20-somite stage (18 hpf), expressed on the dorsal side of the embryo in the developing central and peripheral nervous system (CNS and PNS), in the tail bud and the pronephric ducts. In the PNS, expressed in the otic vesicle, trigeminal ganglion and the anterior lateral line placode. Localized throughout the hindbrain, with highest expression in rhombomeres 3 and 4. In the head, expressed in the olfactory placode and in the diencephalic region. At the end of the segmentation period (20 hpf), expression begins in the newly forming endodermal pouches, and weakly in the pharyngeal arch precursor cells. During the early pharyngula period, expressed in the pectoral fin bud, the developing retina, and still present in the central nervous system and endodermal pouches. In the tail, expressed in the spinal cord and posterior lateral line precursors. Weakly expressed in the pronephric ducts, only in the corpuscles of Stanius. At 48 hpf, still expressed in the retina and brain, where expression is almost uniform. At this stage, expression is decreased in the spinal cord and is absent from the lateral line cells and pronephric ducts, but appears in the intestine and continues in the pharyngeal arches. In 72 hpf embryos, expression in the brain remains uniform but is restricted to amacrine cells in the retina. In the pharyngeal arches, expression continues to be limited to the ectodermal and endodermal covering cells.

Its subcellular location is the nucleus. The protein is Prothymosin alpha-A (ptmaa) of Danio rerio (Zebrafish).